The sequence spans 105 residues: ATP synthase subunit c (105 aa).

2 helical membrane passes run 37-57 (IGAGITMVGGATVGLGQGYIF) and 82-102 (SAISESSSIYSLLIAFILIFV).

Belongs to the ATPase C chain family. In terms of assembly, F-type ATPases have 2 components, F(1) - the catalytic core - and F(0) - the membrane proton channel. F(1) has five subunits: alpha(3), beta(3), gamma(1), delta(1), epsilon(1). F(0) has three main subunits: a(1), b(2) and c(10-14). The alpha and beta chains form an alternating ring which encloses part of the gamma chain. F(1) is attached to F(0) by a central stalk formed by the gamma and epsilon chains, while a peripheral stalk is formed by the delta and b chains.

It localises to the cell membrane. F(1)F(0) ATP synthase produces ATP from ADP in the presence of a proton or sodium gradient. F-type ATPases consist of two structural domains, F(1) containing the extramembraneous catalytic core and F(0) containing the membrane proton channel, linked together by a central stalk and a peripheral stalk. During catalysis, ATP synthesis in the catalytic domain of F(1) is coupled via a rotary mechanism of the central stalk subunits to proton translocation. Functionally, key component of the F(0) channel; it plays a direct role in translocation across the membrane. A homomeric c-ring of between 10-14 subunits forms the central stalk rotor element with the F(1) delta and epsilon subunits. The sequence is that of ATP synthase subunit c from Mycoplasma pneumoniae (strain ATCC 29342 / M129 / Subtype 1) (Mycoplasmoides pneumoniae).